We begin with the raw amino-acid sequence, 190 residues long: Vascular endothelial growth factor A (190 aa).

The N-terminal stretch at 1–26 (MNFLLSWVHWSLALLLYLHHAKWSQA) is a signal peptide. Intrachain disulfides connect Cys51–Cys93, Cys82–Cys127, and Cys86–Cys129. N-linked (GlcNAc...) asparagine glycosylation is present at Asn100.

The protein belongs to the PDGF/VEGF growth factor family. In terms of assembly, homodimer; disulfide-linked. Also found as heterodimer with PGF. Interacts with NRP1. Interacts with isoform 2 of BSG. Interacts with CD82; this interaction inhibits VEGFA-mediated signaling pathway.

It localises to the secreted. Its function is as follows. Growth factor active in angiogenesis, vasculogenesis and endothelial cell growth. Induces endothelial cell proliferation, promotes cell migration, inhibits apoptosis and induces permeabilization of blood vessels. Binds to the FLT1/VEGFR1 and KDR/VEGFR2 receptors, heparan sulfate and heparin. Binding to NRP1 receptor initiates a signaling pathway needed for motor neuron axon guidance and cell body migration, including for the caudal migration of facial motor neurons from rhombomere 4 to rhombomere 6 during embryonic development. Also binds the DEAR/FBXW7-AS1 receptor. This chain is Vascular endothelial growth factor A (VEGFA), found in Equus caballus (Horse).